Here is a 344-residue protein sequence, read N- to C-terminus: Uroporphyrinogen decarboxylase (344 aa).

Substrate is bound by residues 26–30 (RQAGR), phenylalanine 45, aspartate 75, tyrosine 151, serine 206, and histidine 320.

The protein belongs to the uroporphyrinogen decarboxylase family. Homodimer.

The protein resides in the cytoplasm. The enzyme catalyses uroporphyrinogen III + 4 H(+) = coproporphyrinogen III + 4 CO2. It functions in the pathway porphyrin-containing compound metabolism; protoporphyrin-IX biosynthesis; coproporphyrinogen-III from 5-aminolevulinate: step 4/4. Functionally, catalyzes the decarboxylation of four acetate groups of uroporphyrinogen-III to yield coproporphyrinogen-III. The protein is Uroporphyrinogen decarboxylase of Staphylococcus haemolyticus (strain JCSC1435).